A 572-amino-acid chain; its full sequence is Protein 5NUC (572 aa).

The first 25 residues, 1–25 (MLFFLNFFVLVFSIELALLTASAAA), serve as a signal peptide directing secretion. Zn(2+) is bound by residues Asp39 and His41. An intrachain disulfide couples Cys54 to Cys64. The N-linked (GlcNAc...) asparagine glycan is linked to Asn82. Zn(2+)-binding residues include Asp93, Asn125, His227, and His250. Cys360 and Cys365 are oxidised to a cystine. Substrate is bound by residues Arg361, Gln399, Arg404, and Phe427. N-linked (GlcNAc...) asparagine glycans are attached at residues Asn454 and Asn490. Cys488 and Cys491 form a disulfide bridge. 512–518 (FMKDGGD) is a substrate binding site.

This sequence belongs to the 5'-nucleotidase family. Requires Zn(2+) as cofactor.

It carries out the reaction UDP-sugar + H2O = UMP + alpha-D-aldose 1-phosphate.. The enzyme catalyses a ribonucleoside 5'-phosphate + H2O = a ribonucleoside + phosphate. Degradation of external UDP-glucose to uridine monophosphate and glucose-1-phosphate, which can then be used by the cell. This is Protein 5NUC (5NUC) from Lutzomyia longipalpis (Sand fly).